Reading from the N-terminus, the 382-residue chain is Dihydroflavonol 4-reductase (382 aa).

Residues K44 and Y163 each coordinate NADP(+).

This sequence belongs to the NAD(P)-dependent epimerase/dehydratase family. Dihydroflavonol-4-reductase subfamily.

The catalysed reaction is a (2R,3S,4S)-leucoanthocyanidin + NADP(+) = a (2R,3R)-dihydroflavonol + NADPH + H(+). The enzyme catalyses (2S)-flavan-4-ol + NADP(+) = (2S)-flavanone + NADPH + H(+). It participates in pigment biosynthesis; anthocyanin biosynthesis. Its function is as follows. Bifunctional enzyme involved in flavonoid metabolism. In Arabidopsis thaliana (Mouse-ear cress), this protein is Dihydroflavonol 4-reductase (DFRA).